A 666-amino-acid polypeptide reads, in one-letter code: Enzymatic polyprotein (666 aa).

Asp-54 is an active-site residue. The Reverse transcriptase domain maps to 215-445; that stretch reads ENPIDPIKSK…EKINFLGLEI (231 aa).

It belongs to the caulimoviridae enzymatic polyprotein family.

The catalysed reaction is DNA(n) + a 2'-deoxyribonucleoside 5'-triphosphate = DNA(n+1) + diphosphate. In terms of biological role, encodes for at least two polypeptides: protease (PR) and reverse transcriptase (RT). The protease processes the polyprotein in cis. Reverse transcriptase is multifunctional enzyme that converts the viral RNA genome into dsDNA in viral cytoplasmic capsids. This enzyme displays a DNA polymerase activity that can copy either DNA or RNA templates, and a ribonuclease H (RNase H) activity that cleaves the RNA strand of RNA-DNA heteroduplexes in a partially processive 3'- to 5'-endonucleasic mode. Neo-synthesized pregenomic RNA (pgRNA) are encapsidated, and reverse-transcribed inside the nucleocapsid. Partial (+)DNA is synthesized from the (-)DNA template and generates the relaxed circular DNA (RC-DNA) genome. After budding and infection, the RC-DNA migrates in the nucleus, and is converted into a plasmid-like covalently closed circular DNA (cccDNA). In Figwort mosaic virus (strain DxS) (FMV), this protein is Enzymatic polyprotein.